A 396-amino-acid chain; its full sequence is 1-deoxy-D-xylulose 5-phosphate reductoisomerase (396 aa).

5 residues coordinate NADPH: Thr13, Gly14, Ser15, Ile16, and Asn127. Lys128 is a binding site for 1-deoxy-D-xylulose 5-phosphate. Glu129 lines the NADPH pocket. Asp153 contacts Mn(2+). Residues Ser154, Glu155, Ser184, and His207 each coordinate 1-deoxy-D-xylulose 5-phosphate. Glu155 is a binding site for Mn(2+). NADPH is bound at residue Gly213. The 1-deoxy-D-xylulose 5-phosphate site is built by Ser220, Asn225, Lys226, and Glu229. Glu229 lines the Mn(2+) pocket.

This sequence belongs to the DXR family. Mg(2+) serves as cofactor. It depends on Mn(2+) as a cofactor.

It catalyses the reaction 2-C-methyl-D-erythritol 4-phosphate + NADP(+) = 1-deoxy-D-xylulose 5-phosphate + NADPH + H(+). Its pathway is isoprenoid biosynthesis; isopentenyl diphosphate biosynthesis via DXP pathway; isopentenyl diphosphate from 1-deoxy-D-xylulose 5-phosphate: step 1/6. Its function is as follows. Catalyzes the NADPH-dependent rearrangement and reduction of 1-deoxy-D-xylulose-5-phosphate (DXP) to 2-C-methyl-D-erythritol 4-phosphate (MEP). The protein is 1-deoxy-D-xylulose 5-phosphate reductoisomerase of Stutzerimonas stutzeri (strain A1501) (Pseudomonas stutzeri).